A 122-amino-acid polypeptide reads, in one-letter code: Large ribosomal subunit protein uL14 (122 aa).

The protein belongs to the universal ribosomal protein uL14 family. As to quaternary structure, part of the 50S ribosomal subunit. Forms a cluster with proteins L3 and L19. In the 70S ribosome, L14 and L19 interact and together make contacts with the 16S rRNA in bridges B5 and B8.

Functionally, binds to 23S rRNA. Forms part of two intersubunit bridges in the 70S ribosome. The polypeptide is Large ribosomal subunit protein uL14 (Paenarthrobacter aurescens (strain TC1)).